A 760-amino-acid chain; its full sequence is GLC7-interacting protein 4 (760 aa).

Disordered regions lie at residues 449–573 and 593–626; these read KKKP…SLQS and KSASTPNPSASSSLAPSPKVSSINNTSSGKSSST. 2 stretches are compositionally biased toward low complexity: residues 454-474 and 494-506; these read ITKLPASSSPSPSPTSSASPS and SSRSPSVSPVRTT. 2 positions are modified to phosphoserine: Ser497 and Ser501. Basic and acidic residues predominate over residues 512 to 525; the sequence is AETKKSVVSPEKRK. The span at 534-554 shows a compositional bias: polar residues; the sequence is SSSLQSYTNKQQTSYLNSTRH. Composition is skewed to low complexity over residues 561–573 and 594–626; these read SKLNNQRSNSLQS and SASTPNPSASSSLAPSPKVSSINNTSSGKSSST. Ser609 is subject to Phosphoserine.

This sequence belongs to the GIP4 family. Interacts with GLC7.

The protein localises to the cytoplasm. In terms of biological role, GLC7 phosphatase-regulatory protein involved in GLC7 subcellular redistribution and chromosome segregation. The polypeptide is GLC7-interacting protein 4 (GIP4) (Saccharomyces cerevisiae (strain ATCC 204508 / S288c) (Baker's yeast)).